A 1109-amino-acid chain; its full sequence is DNA-directed RNA polymerase subunit beta (1109 aa).

It belongs to the RNA polymerase beta chain family. As to quaternary structure, in plastids the minimal PEP RNA polymerase catalytic core is composed of four subunits: alpha, beta, beta', and beta''. When a (nuclear-encoded) sigma factor is associated with the core the holoenzyme is formed, which can initiate transcription.

The protein resides in the plastid. The protein localises to the chloroplast. It carries out the reaction RNA(n) + a ribonucleoside 5'-triphosphate = RNA(n+1) + diphosphate. In terms of biological role, DNA-dependent RNA polymerase catalyzes the transcription of DNA into RNA using the four ribonucleoside triphosphates as substrates. The chain is DNA-directed RNA polymerase subunit beta from Nephroselmis olivacea (Green alga).